The following is a 215-amino-acid chain: Adenylate kinase (215 aa).

10-15 (GAGKGT) serves as a coordination point for ATP. Residues 30 to 58 (STGDMLREAKRSGTLEKRYLDIMDSGGLL) are NMP. AMP contacts are provided by residues Thr-31, Arg-36, 56 to 58 (GLL), 84 to 87 (GFPR), and Gln-91. An LID region spans residues 128–158 (HRRTDKRSGQIYHLVYNPPPPGAELEHRADD). Residues Arg-129 and 138–139 (IY) contribute to the ATP site. AMP-binding residues include Arg-155 and Arg-166. Residue Gly-194 coordinates ATP.

Belongs to the adenylate kinase family. As to quaternary structure, monomer.

It is found in the cytoplasm. The catalysed reaction is AMP + ATP = 2 ADP. It functions in the pathway purine metabolism; AMP biosynthesis via salvage pathway; AMP from ADP: step 1/1. In terms of biological role, catalyzes the reversible transfer of the terminal phosphate group between ATP and AMP. Plays an important role in cellular energy homeostasis and in adenine nucleotide metabolism. The sequence is that of Adenylate kinase from Sorangium cellulosum (strain So ce56) (Polyangium cellulosum (strain So ce56)).